A 116-amino-acid polypeptide reads, in one-letter code: SPbeta prophage-derived uncharacterized protein YomQ (116 aa).

The polypeptide is SPbeta prophage-derived uncharacterized protein YomQ (yomQ) (Bacillus subtilis (strain 168)).